The primary structure comprises 429 residues: Glutamate-1-semialdehyde 2,1-aminomutase (429 aa).

Position 264 is an N6-(pyridoxal phosphate)lysine (Lys264).

It belongs to the class-III pyridoxal-phosphate-dependent aminotransferase family. HemL subfamily. In terms of assembly, homodimer. Requires pyridoxal 5'-phosphate as cofactor.

Its subcellular location is the cytoplasm. The catalysed reaction is (S)-4-amino-5-oxopentanoate = 5-aminolevulinate. Its pathway is porphyrin-containing compound metabolism; protoporphyrin-IX biosynthesis; 5-aminolevulinate from L-glutamyl-tRNA(Glu): step 2/2. This chain is Glutamate-1-semialdehyde 2,1-aminomutase, found in Campylobacter curvus (strain 525.92).